Reading from the N-terminus, the 56-residue chain is UPF0391 membrane protein Rru_A0119 (56 aa).

A run of 2 helical transmembrane segments spans residues 4–24 and 30–50; these read WALI…GGIA and IAQI…IMHF.

It belongs to the UPF0391 family.

Its subcellular location is the cell membrane. This is UPF0391 membrane protein Rru_A0119 from Rhodospirillum rubrum (strain ATCC 11170 / ATH 1.1.1 / DSM 467 / LMG 4362 / NCIMB 8255 / S1).